The sequence spans 282 residues: Caspase-3 (282 aa).

Active-site residues include histidine 131 and cysteine 174.

Belongs to the peptidase C14A family. In terms of assembly, heterotetramer that consists of two anti-parallel arranged heterodimers, each one formed by a 17 kDa (p17) and a 12 kDa (p12) subunit.

It is found in the cytoplasm. It catalyses the reaction Strict requirement for an Asp residue at positions P1 and P4. It has a preferred cleavage sequence of Asp-Xaa-Xaa-Asp-|- with a hydrophobic amino-acid residue at P2 and a hydrophilic amino-acid residue at P3, although Val or Ala are also accepted at this position.. In terms of biological role, important mediator of apoptosis. At the onset of apoptosis, it proteolytically cleaves poly(ADP-ribose) polymerase PARP1 at a '216-Asp-|-Gly-217' bond. The sequence is that of Caspase-3 (casp3) from Xenopus laevis (African clawed frog).